The following is an 874-amino-acid chain: ATP-dependent RNA helicase DDX54 (874 aa).

The tract at residues 1-76 (MAAGRRVGPG…FPTSECVSDV (76 aa)) is disordered. Positions 20–30 (WKKKRLRKRRT) are enriched in basic residues. T30 bears the Phosphothreonine mark. 4 positions are modified to phosphoserine: S33, S38, S40, and S74. Residues 39–50 (DSDDGEFEIQAE) show a composition bias toward acidic residues. The Q motif signature appears at 95–123 (GGFQSMGLSYPVFKGIMKKGYKVPTPIQR). The 173-residue stretch at 126 to 298 (IPVILDGKDV…RAGLTEPVLI (173 aa)) folds into the Helicase ATP-binding domain. 139 to 146 (ARTGSGKT) provides a ligand contact to ATP. Positions 246–249 (DEAD) match the DEAD box motif. The region spanning 328 to 472 (YLLQNVVRPQ…ARPCEEPSVA (145 aa)) is the Helicase C-terminal domain. Polar residues predominate over residues 581-590 (ASSKDPSSQM). Positions 581–687 (ASSKDPSSQM…PKDFDSERGL (107 aa)) are disordered. Positions 636-645 (TVEGVFTEVV) are enriched in low complexity. Positions 664–685 (ETRQRDQEFYVPYRPKDFDSER) are enriched in basic and acidic residues. Phosphoserine occurs at positions 688 and 690. Residues 712 to 874 (AQNMSRGQQQ…SRKGKMRKRM (163 aa)) are disordered. The segment covering 713–722 (QNMSRGQQQL) has biased composition (polar residues). 2 stretches are compositionally biased toward basic and acidic residues: residues 737–747 (QEDKKKIKTES) and 755–771 (YKRD…KIDD). A phosphoserine mark is found at S774 and S780. A compositionally biased stretch (basic and acidic residues) spans 812 to 823 (MRSELKTKEQIL). The span at 864 to 874 (PSRKGKMRKRM) shows a compositional bias: basic residues.

The protein belongs to the DEAD box helicase family. DDX54/DBP10 subfamily. As to quaternary structure, interacts in a hormone-dependent manner with nuclear receptors.

The protein localises to the nucleus. It is found in the nucleolus. It catalyses the reaction ATP + H2O = ADP + phosphate + H(+). In terms of biological role, has RNA-dependent ATPase activity. Represses the transcriptional activity of nuclear receptors. This chain is ATP-dependent RNA helicase DDX54 (Ddx54), found in Mus musculus (Mouse).